Here is a 224-residue protein sequence, read N- to C-terminus: GTP-binding protein RHO3 (224 aa).

22 to 29 (GDGACGKT) is a GTP binding site. Positions 44-52 (YEPTVFENY) match the Effector region motif. GTP is bound by residues 69–73 (DTAGQ) and 127–130 (LKCD). A disordered region spans residues 205 to 224 (TPKGARDSAPEAESSSCTIM). Cys221 is subject to Cysteine methyl ester. Cys221 carries the S-geranylgeranyl cysteine lipid modification. Positions 222–224 (TIM) are cleaved as a propeptide — removed in mature form.

This sequence belongs to the small GTPase superfamily. Rho family.

It is found in the cell membrane. Functionally, involved in the regulation of actin polarization. Rho proteins are required for distinct steps during polarized hyphal growth of A.gossypii. This Eremothecium gossypii (strain ATCC 10895 / CBS 109.51 / FGSC 9923 / NRRL Y-1056) (Yeast) protein is GTP-binding protein RHO3 (RHO3).